Here is a 440-residue protein sequence, read N- to C-terminus: Streptokinase (440 aa).

An N-terminal signal peptide occupies residues 1 to 26 (MKNYLSFGMFALLFALTFGTVKPVQA). The segment at 72-94 (PAQGGKTEQGLRPKSKPLATDKG) is disordered.

In terms of biological role, this protein is not a protease, but it activates plasminogen by complexing with it. As a potential virulence factor, it is thought to prevent the formation of effective fibrin barriers around the site of infection, thereby contributing to the invasiveness of the cells. The sequence is that of Streptokinase (ska) from Streptococcus pyogenes.